A 392-amino-acid polypeptide reads, in one-letter code: Riboflavin biosynthesis protein PYRD, chloroplastic (392 aa).

The N-terminal 26 residues, 1–26 (MASSLVSRPHLTQRPVRAATLASATR), are a transit peptide targeting the chloroplast. A CMP/dCMP-type deaminase domain is found at 46 to 168 (LDDAHYMRRC…KLQGAGISVR (123 aa)). Histidine 95 contacts Zn(2+). Glutamate 97 acts as the Proton donor in catalysis. Residues cysteine 120 and cysteine 129 each coordinate Zn(2+).

Zn(2+) is required as a cofactor.

The protein localises to the plastid. It is found in the chloroplast. The catalysed reaction is 2,5-diamino-6-hydroxy-4-(5-phosphoribosylamino)-pyrimidine + H2O + H(+) = 5-amino-6-(5-phospho-D-ribosylamino)uracil + NH4(+). The protein operates within cofactor biosynthesis; riboflavin biosynthesis; 5-amino-6-(D-ribitylamino)uracil from GTP: step 2/4. Its function is as follows. Monofunctional pyrimidine deaminase involved in the riboflavin biosynthesis pathway. Also has a reductase domain that lacks catalytically essential substrate-binding residues. This Zea mays (Maize) protein is Riboflavin biosynthesis protein PYRD, chloroplastic (PYRD).